The primary structure comprises 173 residues: Orotate phosphoribosyltransferase (173 aa).

5-phospho-alpha-D-ribose 1-diphosphate-binding positions include Arg-87, Lys-88, Lys-91, and 113 to 121; that span reads EDIATTGQS. Residues Thr-117 and Arg-145 each coordinate orotate.

It belongs to the purine/pyrimidine phosphoribosyltransferase family. PyrE subfamily. As to quaternary structure, homodimer. The cofactor is Mg(2+).

The catalysed reaction is orotidine 5'-phosphate + diphosphate = orotate + 5-phospho-alpha-D-ribose 1-diphosphate. The protein operates within pyrimidine metabolism; UMP biosynthesis via de novo pathway; UMP from orotate: step 1/2. Catalyzes the transfer of a ribosyl phosphate group from 5-phosphoribose 1-diphosphate to orotate, leading to the formation of orotidine monophosphate (OMP). In Natronomonas pharaonis (strain ATCC 35678 / DSM 2160 / CIP 103997 / JCM 8858 / NBRC 14720 / NCIMB 2260 / Gabara) (Halobacterium pharaonis), this protein is Orotate phosphoribosyltransferase.